The chain runs to 331 residues: Glycerol-3-phosphate dehydrogenase [NAD(P)+] (331 aa).

NADPH is bound by residues Trp-14, Arg-34, and Lys-107. The sn-glycerol 3-phosphate site is built by Lys-107, Gly-135, and Ser-137. Ala-139 contributes to the NADPH binding site. Sn-glycerol 3-phosphate contacts are provided by Lys-190, Asp-243, Ser-253, Arg-254, and Asn-255. Lys-190 serves as the catalytic Proton acceptor. An NADPH-binding site is contributed by Arg-254. NADPH contacts are provided by Val-278 and Glu-280.

Belongs to the NAD-dependent glycerol-3-phosphate dehydrogenase family.

It localises to the cytoplasm. It carries out the reaction sn-glycerol 3-phosphate + NAD(+) = dihydroxyacetone phosphate + NADH + H(+). It catalyses the reaction sn-glycerol 3-phosphate + NADP(+) = dihydroxyacetone phosphate + NADPH + H(+). It participates in membrane lipid metabolism; glycerophospholipid metabolism. Its function is as follows. Catalyzes the reduction of the glycolytic intermediate dihydroxyacetone phosphate (DHAP) to sn-glycerol 3-phosphate (G3P), the key precursor for phospholipid synthesis. This Caulobacter vibrioides (strain ATCC 19089 / CIP 103742 / CB 15) (Caulobacter crescentus) protein is Glycerol-3-phosphate dehydrogenase [NAD(P)+].